Reading from the N-terminus, the 488-residue chain is Replication-associated protein (488 aa).

The interval 462–488 is disordered; sequence PRPRQMQRSATEHNLFQYARSGRDPTS.

It localises to the host nucleus. Functionally, plays an essential for the replication of viral DNA. Presumably cleaves viral genomic dsRNA replicative form to initiate rolling circle replication. This Chaetoceros diatodnavirus 1 (Chaetoceros setoense DNA virus) protein is Replication-associated protein.